Reading from the N-terminus, the 203-residue chain is NAD(P)H dehydrogenase (quinone) (203 aa).

In terms of domain architecture, Flavodoxin-like spans 3–194; it reads VLIVYYSMYG…AGARFQGRYV (192 aa). FMN is bound by residues 9–14 and 82–84; these read SMYGHI and TRF. Residue tyrosine 11 coordinates NAD(+). Tryptophan 102 provides a ligand contact to substrate. Residues 117–123 and histidine 138 contribute to the FMN site; that span reads SSATQHG.

The protein belongs to the WrbA family. FMN serves as cofactor.

The catalysed reaction is a quinone + NADH + H(+) = a quinol + NAD(+). It carries out the reaction a quinone + NADPH + H(+) = a quinol + NADP(+). In Geobacter sulfurreducens (strain ATCC 51573 / DSM 12127 / PCA), this protein is NAD(P)H dehydrogenase (quinone).